Here is a 473-residue protein sequence, read N- to C-terminus: Photosystem II CP43 reaction center protein (473 aa).

A propeptide spanning residues 1–14 is cleaved from the precursor; it reads MKTLYSLRRFYPVE. Thr-15 bears the N-acetylthreonine mark. Thr-15 is subject to Phosphothreonine. 5 helical membrane passes run 69–93, 134–155, 178–200, 255–275, and 291–312; these read LFEVAHFVPEKPMYEQGLILLPHLA, LLGPETLEESFPFFGYVWKDRN, KALYFGGVYDTWAPGGGDVRRIT, KPFAWARRALVWSGEAYLSYS, and WFNNTAYPSEFYGPTGPEASQA. Residue Glu-367 participates in [CaMn4O5] cluster binding. Residues 447 to 471 form a helical membrane-spanning segment; sequence RARAAAAGFEKGIDRDFEPVLSMTP.

This sequence belongs to the PsbB/PsbC family. PsbC subfamily. In terms of assembly, PSII is composed of 1 copy each of membrane proteins PsbA, PsbB, PsbC, PsbD, PsbE, PsbF, PsbH, PsbI, PsbJ, PsbK, PsbL, PsbM, PsbT, PsbX, PsbY, PsbZ, Psb30/Ycf12, at least 3 peripheral proteins of the oxygen-evolving complex and a large number of cofactors. It forms dimeric complexes. It depends on Binds multiple chlorophylls and provides some of the ligands for the Ca-4Mn-5O cluster of the oxygen-evolving complex. It may also provide a ligand for a Cl- that is required for oxygen evolution. PSII binds additional chlorophylls, carotenoids and specific lipids. as a cofactor.

It localises to the plastid. Its subcellular location is the chloroplast thylakoid membrane. Its function is as follows. One of the components of the core complex of photosystem II (PSII). It binds chlorophyll and helps catalyze the primary light-induced photochemical processes of PSII. PSII is a light-driven water:plastoquinone oxidoreductase, using light energy to abstract electrons from H(2)O, generating O(2) and a proton gradient subsequently used for ATP formation. In Illicium oligandrum (Star anise), this protein is Photosystem II CP43 reaction center protein.